Here is a 59-residue protein sequence, read N- to C-terminus: MNFTKIFVLIAMAALLLVGQSEAGGLKKLGKKLEGAGKRVFNAAEKALPVVAGAKALGK.

The signal sequence occupies residues 1–23 (MNFTKIFVLIAMAALLLVGQSEA).

The protein localises to the secreted. Functionally, cecropins have lytic and antibacterial activity against several Gram-positive and Gram-negative bacteria. In Aedes albopictus (Asian tiger mosquito), this protein is Cecropin-C type 1 (CECC1).